Consider the following 469-residue polypeptide: Glutamate--tRNA ligase (469 aa).

A 'HIGH' region motif is present at residues 11 to 21 (PSPTGFIHLGN). The short motif at 243 to 247 (KMSKR) is the 'KMSKS' region element. Lys-246 contributes to the ATP binding site.

This sequence belongs to the class-I aminoacyl-tRNA synthetase family. Glutamate--tRNA ligase type 1 subfamily. In terms of assembly, monomer.

The protein localises to the cytoplasm. The catalysed reaction is tRNA(Glu) + L-glutamate + ATP = L-glutamyl-tRNA(Glu) + AMP + diphosphate. In terms of biological role, catalyzes the attachment of glutamate to tRNA(Glu) in a two-step reaction: glutamate is first activated by ATP to form Glu-AMP and then transferred to the acceptor end of tRNA(Glu). This chain is Glutamate--tRNA ligase, found in Burkholderia lata (strain ATCC 17760 / DSM 23089 / LMG 22485 / NCIMB 9086 / R18194 / 383).